Here is a 51-residue protein sequence, read N- to C-terminus: Large ribosomal subunit protein bL33 (51 aa).

The protein belongs to the bacterial ribosomal protein bL33 family.

In Hahella chejuensis (strain KCTC 2396), this protein is Large ribosomal subunit protein bL33.